The primary structure comprises 122 residues: Acidic phospholipase A2 Tpu-E6c (122 aa).

Cystine bridges form between Cys-26-Cys-115, Cys-28-Cys-44, Cys-43-Cys-95, Cys-49-Cys-122, Cys-50-Cys-88, Cys-57-Cys-81, and Cys-75-Cys-86. Ca(2+) contacts are provided by Tyr-27, Gly-29, and Gly-31. His-47 is a catalytic residue. Asp-48 lines the Ca(2+) pocket. Asp-89 is a catalytic residue.

In terms of assembly, monomer. Ca(2+) is required as a cofactor. Expressed by the venom gland.

The protein resides in the secreted. It catalyses the reaction a 1,2-diacyl-sn-glycero-3-phosphocholine + H2O = a 1-acyl-sn-glycero-3-phosphocholine + a fatty acid + H(+). Snake venom phospholipase A2 (PLA2) that impairs hemostasis. It weakly inhibits ADP-induced platelet aggregation when tested on platelet rich plasma from human and rabbit blood (15-25% of inhibition at 5-10 ug of enzyme), and dose-dependently inhibits blood coagulation, possibly by inhibiting thrombin activation. Exhibits high hydrolytic activities toward L-dipalmitoyl phosphatidylcholine. PLA2 catalyzes the calcium-dependent hydrolysis of the 2-acyl groups in 3-sn-phosphoglycerides. The sequence is that of Acidic phospholipase A2 Tpu-E6c from Craspedocephalus puniceus (Flat-nosed pitviper).